We begin with the raw amino-acid sequence, 527 residues long: UPF0053 protein YegH (527 aa).

The next 7 membrane-spanning stretches (helical) occupy residues 14-34 (ITLI…IAIL), 51-71 (LLLA…LVTL), 81-101 (FTFS…LFKA), 122-142 (GAKF…FSLD), 145-165 (ITAV…VIAI), 185-205 (IVIL…AEGF), and 207-227 (FVIP…IEAL). CBS domains are found at residues 306–366 (MTSR…GEPL) and 371–429 (LIRQ…PNEV).

This sequence belongs to the UPF0053 family.

The protein localises to the cell membrane. This chain is UPF0053 protein YegH (yegH), found in Shigella flexneri.